Consider the following 188-residue polypeptide: Ion-translocating oxidoreductase complex subunit B (188 aa).

The segment at 1–23 (MIEAAVSMSALGLGLGLLLGVAA) is hydrophobic. One can recognise a 4Fe-4S domain in the interval 29–88 (ESPPIVDAIEGILPGTNCGACGYPGCRGLAEAMSEGAAPVTACAPGGRDVALALAAIVET). [4Fe-4S] cluster is bound by residues cysteine 46, cysteine 49, cysteine 54, cysteine 71, cysteine 113, cysteine 116, cysteine 119, cysteine 123, cysteine 143, cysteine 146, cysteine 149, and cysteine 153. 4Fe-4S ferredoxin-type domains follow at residues 104-133 (TVAF…GANR) and 134-163 (QIHT…ARVK).

It belongs to the 4Fe4S bacterial-type ferredoxin family. RnfB subfamily. As to quaternary structure, the complex is composed of six subunits: RnfA, RnfB, RnfC, RnfD, RnfE and RnfG. It depends on [4Fe-4S] cluster as a cofactor.

The protein localises to the cellular chromatophore membrane. Its function is as follows. Part of a membrane-bound complex that couples electron transfer with translocation of ions across the membrane. The protein is Ion-translocating oxidoreductase complex subunit B of Cereibacter sphaeroides (strain ATCC 17023 / DSM 158 / JCM 6121 / CCUG 31486 / LMG 2827 / NBRC 12203 / NCIMB 8253 / ATH 2.4.1.) (Rhodobacter sphaeroides).